A 578-amino-acid chain; its full sequence is Isocitrate dehydrogenase kinase/phosphatase (578 aa).

ATP contacts are provided by residues 315–321 (APGIRGM) and lysine 336. Residue aspartate 371 is part of the active site.

It belongs to the AceK family.

It localises to the cytoplasm. It catalyses the reaction L-seryl-[isocitrate dehydrogenase] + ATP = O-phospho-L-seryl-[isocitrate dehydrogenase] + ADP + H(+). Its function is as follows. Bifunctional enzyme which can phosphorylate or dephosphorylate isocitrate dehydrogenase (IDH) on a specific serine residue. This is a regulatory mechanism which enables bacteria to bypass the Krebs cycle via the glyoxylate shunt in response to the source of carbon. When bacteria are grown on glucose, IDH is fully active and unphosphorylated, but when grown on acetate or ethanol, the activity of IDH declines drastically concomitant with its phosphorylation. The sequence is that of Isocitrate dehydrogenase kinase/phosphatase from Shigella boydii serotype 18 (strain CDC 3083-94 / BS512).